The sequence spans 244 residues: uncharacterized protein (244 aa).

This is an uncharacterized protein from Encephalitozoon cuniculi (strain GB-M1) (Microsporidian parasite).